The primary structure comprises 268 residues: MSVTYTSISSLLASPFQRLTSSMWNTATLLLYQLYETGGNSLTSILQNGNLYIPNNISALAGFFQKEVYVSGQPVLTEQDPIYIAGFIGTANQQINQILYSNQQLYYSISQLPKEISYDLYTNLYRTISDLTSTLSSQISQLQKTGINALYSIADFLAYTFTYFYLATVGLANTLNKLTLFLSPPTIEGLQISLSTIPSPIYNGSTIETVRIILQNLSNYIVYIGNKLYNSFPILPGDSLEFHVRNPSNVYAWATGKCTVYALFEVVQ.

Residues 150-172 (LYSIADFLAYTFTYFYLATVGLA) form a helical membrane-spanning segment.

The protein localises to the host membrane. This is an uncharacterized protein from Sulfolobus islandicus rod-shaped virus 1 (SIRV-1).